The sequence spans 283 residues: Circadian clock oscillator protein KaiA (283 aa).

Residues 1–146 form a psR domain, not required to form KaiA:KaiB:KaiC complex, or for a full KaiC phosphorylation cycle region; sequence MAQSTALTIC…LFRLPALKES (146 aa). The 161-residue stretch at 3–163 folds into the KaiA N-terminal domain; the sequence is QSTALTICGL…RLSQKLKERL (161 aa). Residues 164 to 172 form a flexible linker region; that stretch reads GYLGVYYKR. Residues 173 to 281 enclose the KaiA C-terminal domain; sequence DTAFFFRRMS…CEMYRRSIPR (109 aa).

This sequence belongs to the KaiA family. Homodimer. The KaiABC complex composition changes during the circadian cycle to control KaiC phosphorylation. Complexes KaiC(6), KaiA(2-4):KaiC(6), KaiB(6):KaiC(6) and KaiC(6):KaiB(6):KaiA(12) are among the most important forms, many form cooperatively. Binds to KaiB and KaiC, the N-terminus (pseudoreceiver domain PsR) is not required for either interaction. 1 KaiB binds to one subunit of the KaiA homodimer. KaiA and CikA bind to the same region of the KaiB(fs) form and therefore compete.

In terms of biological role, key component of the KaiABC oscillator complex, which constitutes the main circadian regulator in cyanobacteria. Complex composition changes during the circadian cycle to control KaiC phosphorylation. KaiA stimulates KaiC autophosphorylation, while KaiB sequesters KaiA, leading to KaiC autodephosphorylation. KaiA binding to the KaiC CII domain during the subjective day yields KaiA(2-4):KaiC(6) complexes which stimulate KaiC autophosphorylation. Phospho-Ser-431 KaiC accumulation triggers binding of KaiB during the subjective night to form the KaiB(6):KaiC(6) complex, leading to changes in the output regulators CikA and SasA. KaiB(6):KaiC(6) formation exposes a site for KaiA binding on KaiB that sequesters KaiA from KaiC's CII domain, making the KaiC(6):KaiB(6):KaiA(12) complex resulting in KaiC autodephosphorylation. Complete dephosphorylation of KaiC leads to dissociation of KaiA(2):KaiB(1), completing 1 cycle of the Kai oscillator. Formation of the KaiB:KaiC complex is promoted by KaiA, helping switch KaiC from its autophosphorylation to autodephosphatase function. Its function is as follows. Binds oxidized quinones via the N-terminal PsR domain, allowing it to sense redox changes and possibly mediate clock input. The polypeptide is Circadian clock oscillator protein KaiA (Thermosynechococcus vestitus (strain NIES-2133 / IAM M-273 / BP-1)).